We begin with the raw amino-acid sequence, 295 residues long: Urease accessory protein UreD (295 aa).

It belongs to the UreD family. In terms of assembly, ureD, UreF and UreG form a complex that acts as a GTP-hydrolysis-dependent molecular chaperone, activating the urease apoprotein by helping to assemble the nickel containing metallocenter of UreC. The UreE protein probably delivers the nickel.

It localises to the cytoplasm. Functionally, required for maturation of urease via the functional incorporation of the urease nickel metallocenter. The chain is Urease accessory protein UreD from Saccharophagus degradans (strain 2-40 / ATCC 43961 / DSM 17024).